The chain runs to 423 residues: Histidine--tRNA ligase (423 aa).

Belongs to the class-II aminoacyl-tRNA synthetase family. Homodimer.

It localises to the cytoplasm. It carries out the reaction tRNA(His) + L-histidine + ATP = L-histidyl-tRNA(His) + AMP + diphosphate + H(+). The sequence is that of Histidine--tRNA ligase from Orientia tsutsugamushi (strain Ikeda) (Rickettsia tsutsugamushi).